A 219-amino-acid chain; its full sequence is MSGLSGPPTRRGPFPLALLLLFLLGPSLVLAISFHLPINSRKCLREEIHKDLLVTGAYEISDQSGGAGGLRSHLKITDSAGHILYSKEDATKGKFAFTTEDYDMFEVCFESKGTGRIPDQLVILDMKHGVEAKNYEEIAKVEKLKPLEVELRRLEDLSESIVNDFAYMEKREEEMRDTNESTNTRVLYFSIFSMFCLIGLATWQVFYLRRFFKAKKLIE.

An N-terminal signal peptide occupies residues Met-1–Ala-31. Residues Met-1–Glu-142 form a required for interaction with STX17 region. At Ile-32 to Arg-185 the chain is on the lumenal side. In terms of domain architecture, GOLD spans Arg-41–Ser-193. Residues Arg-171 and Arg-176 each carry the dimethylated arginine modification. N-linked (GlcNAc...) asparagine glycosylation occurs at Asn-179. The chain crosses the membrane as a helical span at residues Val-186–Phe-206. The interaction with COPG1 stretch occupies residues Gln-204 to Glu-219. Residues Tyr-207 to Glu-219 lie on the Cytoplasmic side of the membrane. The tract at residues Tyr-207 to Glu-219 is interaction with ARF1 and IL1B. Residues Phe-211–Phe-212 carry the COPII vesicle coat-binding motif. The short motif at Phe-211–Glu-219 is the COPI vesicle coat-binding element.

Belongs to the EMP24/GP25L family. In terms of assembly, predominantly dimeric and to a lesser extent monomeric in the ER. Monomer and dimer in ERGIC and cis-Golgi network. Forms homooligomer (via GOLD domain); the assembly is promoted by direct binding with leaderless cargos and may form a protein channel that facilitates cargo entry into the ERGIC. Forms heterooligomeric complexes with other members of the p24 family such as TMED2, TMED7 and TMED9. Interacts (via GOLD domain) with TMED2 (via GOLD domain); the complex is required for export of TMED10 from the ER to the cis-Golgi network; the complex is proposed to be involved in cis-Golgi network dynamics and / or biogenesis. Associates with the COPI vesicle coat subunits (coatomer). Tetramerization of the cytoplasmic domain at the Golgi membrane in vitro; the complex is proposed to interact with COPI coatomer and induce budding of the vesicles. Interacts with COPG1; the interaction involves TMED10 homodimer. Interacts with ARF1 (GDP-bound); the interaction probably involves a TMED10 oligomer. Interacts with SEC23A, SEC24B, SEC24C and SEC24D components of the coat protein complex II/COPII, indicative of an association of TMED10 with the COPII vesicle coat. Interacts with CD59. Interacts with MPPE1/PGAP5; the complex might recruit and sort GPI-anchored proteins to the ER-exit site, or the interaction might lead to recycling of PGAP5 between the ER and the Golgi. Interacts with F2LR1/PAR2. Interacts with KDELR2/ERD2; the interaction is disrupted by KDELR2 ligand. Found in a complex composed at least of SURF4, TMED2 and TMED10. Associates with the presenilin-dependent gamma-secretase complex. Interacts with STX17; the interaction is direct. Interacts with IL-1; the interaction is direct. Interacts with RAB21 (active GTP-bound form); the interaction is indirect and regulates TMED10 abundance and localization at the Golgi.

The protein localises to the endoplasmic reticulum membrane. The protein resides in the endoplasmic reticulum-Golgi intermediate compartment membrane. Its subcellular location is the golgi apparatus membrane. It localises to the golgi apparatus. It is found in the cis-Golgi network membrane. The protein localises to the trans-Golgi network membrane. The protein resides in the cytoplasmic vesicle. Its subcellular location is the secretory vesicle membrane. It localises to the cell membrane. It is found in the melanosome. Its function is as follows. Cargo receptor involved in protein vesicular trafficking and quality control in the endoplasmic reticulum (ER) and Golgi. The p24 protein family is a group of transmembrane proteins that bind coat protein complex I/COPI and coat protein complex II/COPII involved in vesicular trafficking between the membranes. Acts at the lumenal side for incorporation of secretory cargo molecules into transport vesicles and involved in vesicle coat formation at the cytoplasmic side. Mainly functions in the early secretory pathway and cycles between the ER, ER-Golgi intermediate compartment (ERGIC) and Golgi, mediating cargo transport through COPI and COPII-coated vesicles. In COPII vesicle-mediated anterograde transport, involved in the transport of GPI-anchored proteins by acting together with TMED2 as their cargo receptor; the function specifically implies SEC24C and SEC24D of the COPII vesicle coat and lipid raft-like microdomains of the ER. Recognizes GPI anchors structural remodeled in the ER by the GPI inositol-deacylase/PGAP1 and the metallophosphoesterase MPPE1/PGAP5. In COPI vesicle-mediated retrograde transport, involved in the biogenesis of COPI vesicles and vesicle coat recruitment. Involved in trafficking of amyloid beta A4 protein and soluble APP-beta release (independent from the modulation of gamma-secretase activity). Involved in the KDELR2-mediated retrograde transport of the toxin A subunit (CTX-A-K63)together with COPI and the COOH terminus of KDELR2. On Golgi membranes, acts as a primary receptor for ARF1-GDP, a GTP-binding protein involved in COPI-vesicle formation. Increases coatomer-dependent GTPase-activating activity of ARFGAP2 which mediates the hydrolysis of ARF1-bound GTP and therefore modulates protein trafficking from the Golgi apparatus. Involved in the exocytic trafficking of G protein-coupled receptors F2LR1/PAR2 (trypsin and tryspin-like enzyme receptor), OPRM1 (opioid receptor) and P2RY4 (UTD and UDP receptor) from the Golgi to the plasma membrane, thus contributing to receptor resensitization. In addition to its cargo receptor activity, may also act as a protein channel after oligomerization, facilitating the post-translational entry of leaderless cytoplasmic cargo into the ERGIC. Involved in the translocation into ERGIC, the vesicle entry and the secretion of leaderless cargos (lacking the secretion signal sequence), including the mature form of interleukin 1/IL-1 family members, the alpha-crystallin B chain HSPB5, the carbohydrate-binding proteins galectin-1/LGALS1 and galectin-3/LGALS3, the microtubule-associated protein Tau/MAPT, and the annexin A1/ANXA1; the translocation process is dependent on cargo protein unfolding and enhanced by chaperones HSP90AB1 and HSP90B1/GRP9. Could also associates with the presenilin-dependent gamma-secretase complex in order to regulate gamma-cleavages of the amyloid beta A4 protein to yield amyloid-beta 40/Abeta40. This chain is Transmembrane emp24 domain-containing protein 10 (TMED10), found in Pongo abelii (Sumatran orangutan).